A 209-amino-acid chain; its full sequence is Ras-like protein (209 aa).

Residue 10-17 (GGGLVGKS) participates in GTP binding. The Effector region motif lies at 55–63 (YDPTVEDSR). Position 58 is a phosphothreonine (threonine 58). GTP contacts are provided by residues 79–83 (DTAGQ) and 140–143 (NKAD). Cysteine 206 carries the cysteine methyl ester modification. A lipid anchor (S-geranylgeranyl cysteine) is attached at cysteine 206. The propeptide at 207 to 209 (LII) is removed in mature form.

The protein belongs to the small GTPase superfamily. Ras family. Phosphorylated in the presence of insulin.

The protein resides in the cell membrane. It carries out the reaction GTP + H2O = GDP + phosphate + H(+). With respect to regulation, alternates between an inactive form bound to GDP and an active form bound to GTP. Activated by a guanine nucleotide-exchange factor (GEF) and inactivated by a GTPase-activating protein (GAP). In terms of biological role, this protein is activated by the insulin/insulin (insulin-like)-receptor system. This transition enables the ras protein to interact with the lectin-receptor/lectin complex, a process which ultimately lead to an initiation of an intra-cellular signal-transduction chain. This Geodia cydonium (Sponge) protein is Ras-like protein.